Consider the following 196-residue polypeptide: Aliphatic amidase regulator (196 aa).

Positions 129–190 (MAKLKQKTEQ…PILKIAQELL (62 aa)) constitute an ANTAR domain.

Forms a complex with AmiC.

In terms of biological role, positive controlling element of AmiE, the gene for aliphatic amidase. Acts as a transcriptional antitermination factor. It is thought to allow RNA polymerase read through a rho-independent transcription terminator between the AmiE promoter and gene. The polypeptide is Aliphatic amidase regulator (amiR) (Pseudomonas aeruginosa (strain ATCC 15692 / DSM 22644 / CIP 104116 / JCM 14847 / LMG 12228 / 1C / PRS 101 / PAO1)).